We begin with the raw amino-acid sequence, 153 residues long: Ribosomal RNA large subunit methyltransferase H (153 aa).

The S-adenosyl-L-methionine site is built by leucine 71 and glycine 102.

It belongs to the RNA methyltransferase RlmH family. As to quaternary structure, homodimer.

The protein localises to the cytoplasm. It catalyses the reaction pseudouridine(1915) in 23S rRNA + S-adenosyl-L-methionine = N(3)-methylpseudouridine(1915) in 23S rRNA + S-adenosyl-L-homocysteine + H(+). Its function is as follows. Specifically methylates the pseudouridine at position 1915 (m3Psi1915) in 23S rRNA. The chain is Ribosomal RNA large subunit methyltransferase H from Anaeromyxobacter sp. (strain K).